Here is a 713-residue protein sequence, read N- to C-terminus: Probable glutamate carboxypeptidase VP8 (713 aa).

At 1-10 (MPHSVLARLP) the chain is on the cytoplasmic side. Residues 11 to 31 (PGSVRLVAAFGLLLLVSLLVL) traverse the membrane as a helical; Signal-anchor for type II membrane protein segment. The Extracellular portion of the chain corresponds to 32–713 (HRRPGRPHVA…PTNFSSLVTP (682 aa)). N-linked (GlcNAc...) asparagine glycans are attached at residues N66 and N311. A catalytic region spans residues 245 to 539 (ATSGAERLKF…EIWGLLALRL (295 aa)). Zn(2+)-binding residues include H345 and D355. Residue E392 is the Nucleophile of the active site. 3 residues coordinate Zn(2+): E393, D421, and H505. 2 N-linked (GlcNAc...) asparagine glycosylation sites follow: N667 and N706.

Belongs to the peptidase M28 family. M28B subfamily. Zn(2+) is required as a cofactor.

Its subcellular location is the cell membrane. The catalysed reaction is Release of an unsubstituted, C-terminal glutamyl residue, typically from Ac-Asp-Glu or folylpoly-gamma-glutamates.. In terms of biological role, involved in the regulation of meristem development and seed maturation processes. Mediates regulation of embryonic regulatory genes and genes controlling abscisic acid (ABA) biosynthesis and turnover in developing seeds. May be required for the synthesis of small signaling molecules that integrates meristem and embryo formation in seeds. In Zea mays (Maize), this protein is Probable glutamate carboxypeptidase VP8.